Reading from the N-terminus, the 355-residue chain is Histidinol-phosphate aminotransferase (355 aa).

N6-(pyridoxal phosphate)lysine is present on lysine 218.

This sequence belongs to the class-II pyridoxal-phosphate-dependent aminotransferase family. Histidinol-phosphate aminotransferase subfamily. In terms of assembly, homodimer. It depends on pyridoxal 5'-phosphate as a cofactor.

It carries out the reaction L-histidinol phosphate + 2-oxoglutarate = 3-(imidazol-4-yl)-2-oxopropyl phosphate + L-glutamate. Its pathway is amino-acid biosynthesis; L-histidine biosynthesis; L-histidine from 5-phospho-alpha-D-ribose 1-diphosphate: step 7/9. This is Histidinol-phosphate aminotransferase from Chlorobium limicola (strain DSM 245 / NBRC 103803 / 6330).